Here is a 122-residue protein sequence, read N- to C-terminus: uncharacterized protein (122 aa).

The protein localises to the plastid. This is an uncharacterized protein from Euglena longa (Euglenophycean alga).